The sequence spans 294 residues: Foldase protein PrsA 1 (294 aa).

An N-terminal signal peptide occupies residues 1–21 (MTKLKKVMISVIAATLLLLAG). Cys-22 carries N-palmitoyl cysteine lipidation. Cys-22 carries the S-diacylglycerol cysteine lipid modification. The 92-residue stretch at 135–226 (EPDITVRHIL…YGYHLIQLVK (92 aa)) folds into the PpiC domain.

Belongs to the PrsA family.

It is found in the cell membrane. The catalysed reaction is [protein]-peptidylproline (omega=180) = [protein]-peptidylproline (omega=0). Functionally, plays a major role in protein secretion by helping the post-translocational extracellular folding of several secreted proteins. This is Foldase protein PrsA 1 from Listeria monocytogenes serotype 4b (strain F2365).